Here is an 803-residue protein sequence, read N- to C-terminus: H(+)/Cl(-) exchange transporter 7 (803 aa).

Residues 1–46 form a disordered region; the sequence is MANVSKKVSWSGRDRDDEEGAPLLRRTGQPDEETPLLNGAGPGARQ. Residues 1–124 are Cytoplasmic-facing; that stretch reads MANVSKKVSW…TAFRTVEIKR (124 aa). At S9 the chain carries Phosphoserine. Transmembrane regions (helical) follow at residues 125 to 157 and 172 to 195; these read WVIC…YRVI and FSLL…VAFI. Residues 201–205 carry the Selectivity filter part_1 motif; the sequence is GSGIP. Residue S202 coordinates chloride. The helical intramembrane region spans 204–211; the sequence is IPQIKCFL. The next 2 membrane-spanning stretches (helical) occupy residues 221–239 and 245–262; these read RLKT…VVGG and EGPM…ISQG. Positions 243 to 247 match the Selectivity filter part_2 motif; it reads GKEGP. 2 intramembrane regions (helical) span residues 286 to 298 and 302 to 310; these read FVSA…VSAA and PVGGVLFSL. 5 helical membrane passes run 320-339, 373-403, 408-430, 485-505, and 510-533; these read FLTW…LNFV, IPVF…FRIR, PCLQ…FVLI, PMTL…TYGL, and GVFI…MSYL. The Selectivity filter part_3 signature appears at 510–514; the sequence is GVFIP. Residue F512 coordinates chloride. The helical intramembrane region spans 543–557; it reads GKYALMGAAAQLGGI. The note=Loop between two helices intramembrane region spans 558–560; that stretch reads VRM. Residues 561–572 constitute an intramembrane region (helical); it reads TLSLTVIMMEAT. The segment at residues 573 to 576 is an intramembrane region (note=Loop between two helices); sequence SNVT. Residues 577–595 form a helical membrane-spanning segment; it reads YGFPIMLVLMTAKIVGDVF. Residues 596–803 are Cytoplasmic-facing; it reads IEGLYDMHIQ…GLEELSLAQT (208 aa). Y600 is a binding site for chloride. 2 consecutive CBS domains span residues 629-693 and 739-797; these read MSTP…VFVE and MNPS…GLEE. Residues 656-658 and 781-784 each bind ATP; these read HNG and TRKD. S799 carries the phosphoserine modification.

This sequence belongs to the chloride channel (TC 2.A.49) family. ClC-7/CLCN7 subfamily. Chloride channel 7 are heteromers of alpha (CLCN7) and beta (OSTM1) subunits. Brain, testis, muscle and kidney.

The protein resides in the lysosome membrane. It carries out the reaction 2 chloride(in) + H(+)(out) = 2 chloride(out) + H(+)(in). Its function is as follows. Slowly voltage-gated channel mediating the exchange of chloride ions against protons. Functions as antiporter and contributes to the acidification of the lysosome lumen and may be involved in maintaining lysosomal pH. The CLC channel family contains both chloride channels and proton-coupled anion transporters that exchange chloride or another anion for protons. The presence of conserved gating glutamate residues is typical for family members that function as antiporters. This Rattus norvegicus (Rat) protein is H(+)/Cl(-) exchange transporter 7 (Clcn7).